A 138-amino-acid chain; its full sequence is Small ribosomal subunit protein uS11c (138 aa).

The segment at 1 to 22 is disordered; it reads MAKPIPKIGSRKNARSGSRKHL. A compositionally biased stretch (basic residues) spans 9-22; that stretch reads GSRKNARSGSRKHL.

It belongs to the universal ribosomal protein uS11 family. As to quaternary structure, part of the 30S ribosomal subunit.

Its subcellular location is the plastid. The protein resides in the chloroplast. This Lotus japonicus (Lotus corniculatus var. japonicus) protein is Small ribosomal subunit protein uS11c.